The primary structure comprises 442 residues: Serine protease AprX (442 aa).

The Peptidase S8 domain maps to 122–439 (KALLDTATEA…AGAVNAENSV (318 aa)). Active-site charge relay system residues include aspartate 155 and histidine 187. Residues 318 to 337 (DNNTASSDDDTVASFSSRGP) form a disordered region. Residue serine 384 is the Charge relay system of the active site. The segment at 423–442 (EDPNIYGAGAVNAENSVPGQ) is disordered.

This sequence belongs to the peptidase S8 family.

The protein resides in the cytoplasm. Is completely inhibited by phenylmethanesulphonylfluoride (PMSF) in vitro. In terms of biological role, displays serine protease activity. Seems to have a broad substrate specificity. The polypeptide is Serine protease AprX (aprX) (Bacillus subtilis (strain 168)).